Consider the following 948-residue polypeptide: Puromycin-sensitive aminopeptidase (948 aa).

Residues glutamate 206 and 341 to 345 (GAMEN) contribute to the substrate site. Zn(2+) is bound at residue histidine 377. The Proton acceptor role is filled by glutamate 378. Zn(2+) contacts are provided by histidine 381 and glutamate 400.

The protein belongs to the peptidase M1 family. The cofactor is Zn(2+). Expressed mainly in intestinal cells in the posterior part of the intestine and in amphid sensory neurons and nerve ring neurons. Expressed in neurons in the male tail. Expressed in mature spermatids (at protein level).

It is found in the cytoplasm. It localises to the cell cortex. The protein resides in the chromosome. The protein localises to the cytoskeleton. Its subcellular location is the spindle pole. The catalysed reaction is Release of an N-terminal amino acid, preferentially alanine, from a wide range of peptides, amides and arylamides.. Its activity is regulated as follows. Inhibited by chelating agent 1,10-phenanthroline, aminopeptidase inhibitors actinonin, amastatin, and leuhistin, and to a lesser extent by puromycin. Aminopeptidase. Required for the exit from meiosis, probably upstream of cyclin cyb-3. Involved in the establishment of the anterior-posterior polarity at the embryonic 1-cell stage by regulating the dynamics of sperm-donated centrosomes. Plays a role in oocyte maturation. Required for embryonic development. The protein is Puromycin-sensitive aminopeptidase of Caenorhabditis elegans.